Consider the following 91-residue polypeptide: MSVLRLFTGRAASAPVARERLQILLAHERSLRGQPDLLMQLREEILAVVSRHVLLDPDKVIVRMDRGKHVSTLEVDIELPNGADRAFASAG.

Belongs to the MinE family.

In terms of biological role, prevents the cell division inhibition by proteins MinC and MinD at internal division sites while permitting inhibition at polar sites. This ensures cell division at the proper site by restricting the formation of a division septum at the midpoint of the long axis of the cell. The chain is Cell division topological specificity factor from Bradyrhizobium sp. (strain BTAi1 / ATCC BAA-1182).